Here is a 505-residue protein sequence, read N- to C-terminus: Deoxyguanosinetriphosphate triphosphohydrolase (505 aa).

The 208-residue stretch at 66 to 273 (RLTHSMEVQQ…MEAADDISYC (208 aa)) folds into the HD domain.

This sequence belongs to the dGTPase family. Type 1 subfamily. As to quaternary structure, homotetramer. Requires Mg(2+) as cofactor.

The catalysed reaction is dGTP + H2O = 2'-deoxyguanosine + triphosphate + H(+). Functionally, dGTPase preferentially hydrolyzes dGTP over the other canonical NTPs. The sequence is that of Deoxyguanosinetriphosphate triphosphohydrolase from Serratia proteamaculans (strain 568).